A 1024-amino-acid polypeptide reads, in one-letter code: Importin-8 (1024 aa).

Residues 22 to 102 (AENELNQSYK…RENMVEAIIR (81 aa)) enclose the Importin N-terminal domain. The interval 896–969 (FGRAQGSEEE…YSTPLDCDNG (74 aa)) is disordered. Composition is skewed to acidic residues over residues 902 to 917 (SEEE…EDEV) and 934 to 952 (DNED…DEGL).

It belongs to the importin beta family.

The protein localises to the cytoplasm. The protein resides in the nucleus. Involved in nuclear protein import, either by acting as autonomous nuclear transport receptor or as an adapter-like protein in association with the importin-beta subunit KPNB1. Acting autonomously, may serve as receptor for nuclear localization signals (NLS) and promote translocation of import substrates through the nuclear pore complex (NPC) by an energy requiring, Ran-dependent mechanism. At the nucleoplasmic side of the NPC, Ran binds to importin, the importin/substrate complex dissociates and importin is re-exported from the nucleus to the cytoplasm where GTP hydrolysis releases Ran. The directionality of nuclear import is thought to be conferred by an asymmetric distribution of the GTP- and GDP-bound forms of Ran between the cytoplasm and nucleus. In vitro mediates the nuclear import of the signal recognition particle protein SRP19. May also be involved in cytoplasm-to-nucleus shuttling of a broad spectrum of other cargos, including Argonaute-microRNAs complexes, the JUN protein, RELA/NF-kappa-B p65 subunit, the translation initiation factor EIF4E and a set of receptor-activated mothers against decapentaplegic homolog (SMAD) transcription factors that play a critical role downstream of the large family of transforming growth factor beta and bone morphogenetic protein (BMP) cytokines. This Danio rerio (Zebrafish) protein is Importin-8 (ipo8).